The primary structure comprises 405 residues: Aspartic protease (405 aa).

The signal sequence occupies residues 1–21 (MISDTVIAILAVALVGSTVQA). Residues 22–81 (APVDATATSTSGIIAVPISKSAAQLAREADPVVSLDWLKKTKAQAQYKHKQANARLHSKR) constitute a propeptide, removed in mature form. In terms of domain architecture, Peptidase A1 spans 97-402 (WTGPITIGGQ…DVGNARVGFA (306 aa)). The active site involves D113. C126 and C131 are joined by a disulfide. D290 is a catalytic residue. The cysteines at positions 332 and 366 are disulfide-linked.

Belongs to the peptidase A1 family.

Its subcellular location is the secreted. With respect to regulation, inhibited by pepstatin A. Functionally, possesses acidic protease activity. Hydrolyzes casein and azoalbumin in vitro. This is Aspartic protease from Phaffia rhodozyma (Yeast).